An 85-amino-acid polypeptide reads, in one-letter code: MAHKKGQGSTQNNRDSIGRRLGVKKFGGEFVRAGNIIIRQRGTATHAGNNVGLGKDHTIFALVDGFVKFERLDKNRKKVSVYPAA.

The protein belongs to the bacterial ribosomal protein bL27 family.

This Campylobacter concisus (strain 13826) protein is Large ribosomal subunit protein bL27.